Reading from the N-terminus, the 981-residue chain is DNA ligase 4 (981 aa).

9 residues coordinate ATP: E320, K322, R327, E380, F424, E484, K489, K506, and K508. The active-site N6-AMP-lysine intermediate is K322. Mg(2+) is bound at residue E380. E484 contributes to the Mg(2+) binding site. The interval 544 to 563 (SEKNNPSSYESGSDSDSDSE) is disordered. BRCT domains lie at 721-819 (SKAD…PKYV) and 875-980 (ERLL…EYAA).

It belongs to the ATP-dependent DNA ligase family. Mg(2+) serves as cofactor.

The protein localises to the nucleus. The enzyme catalyses ATP + (deoxyribonucleotide)n-3'-hydroxyl + 5'-phospho-(deoxyribonucleotide)m = (deoxyribonucleotide)n+m + AMP + diphosphate.. Its function is as follows. DNA ligase involved in DNA non-homologous end joining (NHEJ); required for double-strand break (DSB) repair. This chain is DNA ligase 4 (LIG4), found in Eremothecium gossypii (strain ATCC 10895 / CBS 109.51 / FGSC 9923 / NRRL Y-1056) (Yeast).